The sequence spans 185 residues: Transcription antitermination protein NusB (185 aa).

The protein belongs to the NusB family.

Its function is as follows. Involved in transcription antitermination. Required for transcription of ribosomal RNA (rRNA) genes. Binds specifically to the boxA antiterminator sequence of the ribosomal RNA (rrn) operons. This chain is Transcription antitermination protein NusB, found in Rhodospirillum rubrum (strain ATCC 11170 / ATH 1.1.1 / DSM 467 / LMG 4362 / NCIMB 8255 / S1).